Here is a 303-residue protein sequence, read N- to C-terminus: NAD kinase (303 aa).

Catalysis depends on D85, which acts as the Proton acceptor. NAD(+)-binding positions include 85 to 86 (DG), R90, 159 to 160 (ND), K187, D189, A224, and Q259.

Belongs to the NAD kinase family. A divalent metal cation serves as cofactor.

It localises to the cytoplasm. It catalyses the reaction NAD(+) + ATP = ADP + NADP(+) + H(+). Functionally, involved in the regulation of the intracellular balance of NAD and NADP, and is a key enzyme in the biosynthesis of NADP. Catalyzes specifically the phosphorylation on 2'-hydroxyl of the adenosine moiety of NAD to yield NADP. The protein is NAD kinase of Bdellovibrio bacteriovorus (strain ATCC 15356 / DSM 50701 / NCIMB 9529 / HD100).